We begin with the raw amino-acid sequence, 463 residues long: O-acetyltransferase SAT5 (463 aa).

This sequence belongs to the trichothecene 3-O-acetyltransferase family.

It participates in mycotoxin biosynthesis. In terms of biological role, O-acetyltransferase; part of the satratoxin SC1 cluster involved in the biosynthesis of satratoxins, trichothecene mycotoxins that are associated with human food poisonings. Satratoxins are suggested to be made by products of multiple gene clusters (SC1, SC2 and SC3) that encode 21 proteins in all, including polyketide synthases, acetyltransferases, and other enzymes expected to modify the trichothecene skeleton. SC1 encodes 10 proteins, SAT1 to SAT10. The largest are SAT8, which encodes a putative polyketide synthase (PKS) with a conventional non-reducing architecture, and SAT10, a putative protein containing four ankyrin repeats and thus may be involved in protein scaffolding. The putative short-chain reductase SAT3 may assist the PKS in some capacity. SAT6 contains a secretory lipase domain and acts probably as a trichothecene esterase. SAT5 encodes a putative acetyltransferase, and so, with SAT6, may affect endogenous protection from toxicity. The probable transcription factor SAT9 may regulate the expression of the SC1 cluster. SC2 encodes proteins SAT11 to SAT16, the largest of which encodes the putative reducing PKS SAT13. SAT11 is a cytochrome P450 monooxygenase, while SAT14 and SAT16 are probable acetyltransferases. The SC2 cluster may be regulated by the transcription factor SAT15. SC3 is a small cluster that encodes 5 proteins, SAT17 to SAT21. SAT21 is a putative MFS-type transporter which may have a role in exporting secondary metabolites. The four other proteins putatively encoded in SC3 include the taurine hydroxylase-like protein SAT17, the O-methyltransferase SAT18, the acetyltransferase SAT19, and the Cys6-type zinc finger SAT20, the latter being probably involved in regulation of SC3 expression. In Stachybotrys chartarum (strain CBS 109288 / IBT 7711) (Toxic black mold), this protein is O-acetyltransferase SAT5.